A 169-amino-acid polypeptide reads, in one-letter code: Sorting nexin-24 (169 aa).

N-acetylmethionine is present on Met1. The PX domain occupies Met1 to Ser125. 4 residues coordinate a 1,2-diacyl-sn-glycero-3-phospho-(1D-myo-inositol-3-phosphate): Arg38, Ser40, Lys61, and Arg74. Phosphoserine occurs at positions 113 and 116.

It belongs to the sorting nexin family.

Its subcellular location is the cytoplasmic vesicle membrane. May be involved in several stages of intracellular trafficking. This is Sorting nexin-24 (Snx24) from Rattus norvegicus (Rat).